Here is a 241-residue protein sequence, read N- to C-terminus: Thiamine import ATP-binding protein ThiQ (241 aa).

Residues 7–235 (IRLSDVRFSY…AGPEALRHYI (229 aa)) form the ABC transporter domain. An ATP-binding site is contributed by 37 to 44 (GPSGSGKS).

Belongs to the ABC transporter superfamily. Thiamine importer (TC 3.A.1.19.1) family. As to quaternary structure, the complex is composed of two ATP-binding proteins (ThiQ), two transmembrane proteins (ThiP) and a solute-binding protein (ThiB).

The protein resides in the cell inner membrane. The enzyme catalyses thiamine(out) + ATP + H2O = thiamine(in) + ADP + phosphate + H(+). In terms of biological role, part of the ABC transporter complex ThiBPQ involved in thiamine import. Responsible for energy coupling to the transport system. The protein is Thiamine import ATP-binding protein ThiQ of Brucella melitensis biotype 1 (strain ATCC 23456 / CCUG 17765 / NCTC 10094 / 16M).